The chain runs to 413 residues: Serine hydroxymethyltransferase (413 aa).

(6S)-5,6,7,8-tetrahydrofolate-binding positions include leucine 115 and 119–121 (GHL). At lysine 224 the chain carries N6-(pyridoxal phosphate)lysine.

It belongs to the SHMT family. In terms of assembly, homodimer. Pyridoxal 5'-phosphate is required as a cofactor.

It localises to the cytoplasm. It catalyses the reaction (6R)-5,10-methylene-5,6,7,8-tetrahydrofolate + glycine + H2O = (6S)-5,6,7,8-tetrahydrofolate + L-serine. It participates in one-carbon metabolism; tetrahydrofolate interconversion. Its pathway is amino-acid biosynthesis; glycine biosynthesis; glycine from L-serine: step 1/1. In terms of biological role, catalyzes the reversible interconversion of serine and glycine with tetrahydrofolate (THF) serving as the one-carbon carrier. This reaction serves as the major source of one-carbon groups required for the biosynthesis of purines, thymidylate, methionine, and other important biomolecules. Also exhibits THF-independent aldolase activity toward beta-hydroxyamino acids, producing glycine and aldehydes, via a retro-aldol mechanism. The protein is Serine hydroxymethyltransferase of Mycoplasma mycoides subsp. mycoides SC (strain CCUG 32753 / NCTC 10114 / PG1).